The chain runs to 469 residues: Glutamate--tRNA ligase (469 aa).

The 'HIGH' region signature appears at 11–21 (PSPTGFIHLGN). The span at 118–131 (GEKPRYDGTWRPEP) shows a compositional bias: basic and acidic residues. The interval 118–138 (GEKPRYDGTWRPEPGKVLPEP) is disordered. A 'KMSKS' region motif is present at residues 243–247 (KMSKR). K246 is a binding site for ATP.

It belongs to the class-I aminoacyl-tRNA synthetase family. Glutamate--tRNA ligase type 1 subfamily. Monomer.

The protein localises to the cytoplasm. The enzyme catalyses tRNA(Glu) + L-glutamate + ATP = L-glutamyl-tRNA(Glu) + AMP + diphosphate. Functionally, catalyzes the attachment of glutamate to tRNA(Glu) in a two-step reaction: glutamate is first activated by ATP to form Glu-AMP and then transferred to the acceptor end of tRNA(Glu). The sequence is that of Glutamate--tRNA ligase from Burkholderia thailandensis (strain ATCC 700388 / DSM 13276 / CCUG 48851 / CIP 106301 / E264).